A 245-amino-acid polypeptide reads, in one-letter code: Probable octanoyltransferase 2 (245 aa).

Positions 38–227 (MEYKPVLYFQ…SIEKEFDIKE (190 aa)) constitute a BPL/LPL catalytic domain. Residues 89–96 (RGGYETYH), 157–159 (SIG), and 170–172 (GMA) contribute to the substrate site. Cysteine 188 (acyl-thioester intermediate) is an active-site residue.

It belongs to the LipB family.

It localises to the cytoplasm. The enzyme catalyses octanoyl-[ACP] + L-lysyl-[protein] = N(6)-octanoyl-L-lysyl-[protein] + holo-[ACP] + H(+). It participates in protein modification; protein lipoylation via endogenous pathway; protein N(6)-(lipoyl)lysine from octanoyl-[acyl-carrier-protein]: step 1/2. Catalyzes the transfer of endogenously produced octanoic acid from octanoyl-acyl-carrier-protein onto the lipoyl domains of lipoate-dependent enzymes. Lipoyl-ACP can also act as a substrate although octanoyl-ACP is likely to be the physiological substrate. The sequence is that of Probable octanoyltransferase 2 from Picrophilus torridus (strain ATCC 700027 / DSM 9790 / JCM 10055 / NBRC 100828 / KAW 2/3).